We begin with the raw amino-acid sequence, 555 residues long: GPI-anchor transamidase component PIGS (555 aa).

Topologically, residues Ala-2–Arg-18 are cytoplasmic. A cardiolipin contacts are provided by Arg-15 and Arg-18. The chain crosses the membrane as a helical span at residues Ala-19 to Thr-39. Residues Glu-40 to Gln-517 lie on the Lumenal side of the membrane. Residues Asn-267 and Asn-370 are each glycosylated (N-linked (GlcNAc...) asparagine). The helical transmembrane segment at Lys-518–Pro-532 threads the bilayer. The Cytoplasmic portion of the chain corresponds to Ile-533 to Asp-555.

The protein belongs to the PIGS family. As to quaternary structure, heteropentamer. Part of the GPI-anchor transamidase complex, consisting of PIGK, PIGT, PIGS, PIGU and GAA1.

It localises to the endoplasmic reticulum membrane. Its pathway is glycolipid biosynthesis; glycosylphosphatidylinositol-anchor biosynthesis. Its function is as follows. Component of the glycosylphosphatidylinositol-anchor (GPI-anchor) transamidase (GPI-T) complex that catalyzes the formation of the linkage between a proprotein and a GPI-anchor and participates in GPI anchored protein biosynthesis. In Rattus norvegicus (Rat), this protein is GPI-anchor transamidase component PIGS.